Consider the following 262-residue polypeptide: tRNA (guanine-N(1)-)-methyltransferase (262 aa).

Residues Gly111 and 130–135 (LGDFVL) contribute to the S-adenosyl-L-methionine site.

The protein belongs to the RNA methyltransferase TrmD family. Homodimer.

Its subcellular location is the cytoplasm. The catalysed reaction is guanosine(37) in tRNA + S-adenosyl-L-methionine = N(1)-methylguanosine(37) in tRNA + S-adenosyl-L-homocysteine + H(+). Specifically methylates guanosine-37 in various tRNAs. This is tRNA (guanine-N(1)-)-methyltransferase from Desulfitobacterium hafniense (strain Y51).